The following is a 168-amino-acid chain: Nucleoside deoxyribosyltransferase (168 aa).

The Nucleophile role is filled by Glu-103.

The protein belongs to the nucleoside deoxyribosyltransferase family.

The enzyme catalyses 2-deoxy-D-ribosyl-base(1) + base(2) = 2-deoxy-D-ribosyl-base(2) + base(1).. It functions in the pathway nucleotide metabolism; nucleotide salvage pathway. In terms of biological role, catalyzes the cleavage of the glycosidic bond of 2'-deoxyribonucleosides and the transfer of the deoxyribosyl moiety to an acceptor purine or pyrimidine base. This Limosilactobacillus fermentum (Lactobacillus fermentum) protein is Nucleoside deoxyribosyltransferase (ntd).